The sequence spans 256 residues: ATP synthase subunit a (256 aa).

6 helical membrane-spanning segments follow: residues isoleucine 33–leucine 53, tyrosine 92–isoleucine 112, methionine 122–tyrosine 142, phenylalanine 148–isoleucine 168, glycine 191–valine 211, and methionine 235–leucine 255.

The protein belongs to the ATPase A chain family. In terms of assembly, F-type ATPases have 2 components, CF(1) - the catalytic core - and CF(0) - the membrane proton channel. CF(1) has five subunits: alpha(3), beta(3), gamma(1), delta(1), epsilon(1). CF(0) has three main subunits: a, b and c.

The protein localises to the mitochondrion inner membrane. In terms of biological role, mitochondrial membrane ATP synthase (F(1)F(0) ATP synthase or Complex V) produces ATP from ADP in the presence of a proton gradient across the membrane which is generated by electron transport complexes of the respiratory chain. F-type ATPases consist of two structural domains, F(1) - containing the extramembraneous catalytic core and F(0) - containing the membrane proton channel, linked together by a central stalk and a peripheral stalk. During catalysis, ATP synthesis in the catalytic domain of F(1) is coupled via a rotary mechanism of the central stalk subunits to proton translocation. Key component of the proton channel; it may play a direct role in the translocation of protons across the membrane. This is ATP synthase subunit a (ATP6) from Wickerhamomyces canadensis (Yeast).